Reading from the N-terminus, the 1255-residue chain is Kinesin-related protein 7 (1255 aa).

The segment at 1–26 (MESPVVEGNSGEVATPTLPQPPTPVS) is disordered. One can recognise a Kinesin motor domain in the interval 28–349 (NIRVVCRVRP…LQFGTRAKTI (322 aa)). An ATP-binding site is contributed by 107–114 (GQTASGKT). Composition is skewed to low complexity over residues 454 to 491 (NNNN…QQEN), 545 to 563 (NNNN…DSDG), and 583 to 603 (HNIN…NSNS). 6 disordered regions span residues 454–503 (NNNN…NSSF), 530–564 (GNIS…SDGY), 579–628 (DLND…MDVN), 661–686 (ENEQ…SNAT), 795–864 (EEGS…TKSI), and 915–934 (ISIK…TSIK). A compositionally biased stretch (polar residues) spans 608 to 628 (VSTSYITSSPNLSPSKSMDVN). The segment covering 813 to 834 (GDDDDEENEDNENEDVIVDSDE) has biased composition (acidic residues). A compositionally biased stretch (low complexity) spans 915 to 932 (ISIKSNKEPSPSSSTTTS). Residues 945–965 (IIFTIILTITLVSSSLLCLYL) traverse the membrane as a helical segment. Positions 1088-1223 (NYITKIDQLS…QELEDAPIAL (136 aa)) form a coiled coil.

Belongs to the TRAFAC class myosin-kinesin ATPase superfamily. Kinesin family.

It localises to the nucleus membrane. It is found in the cytoplasm. Its subcellular location is the cytoskeleton. In terms of biological role, microtubule-associated force-producing protein that plays a role in organelle transport. Its motor activity is directed toward the microtubule's plus end. May be involved in cell motility or cell differentiation during prestalk formation. This is Kinesin-related protein 7 (kif7) from Dictyostelium discoideum (Social amoeba).